A 520-amino-acid chain; its full sequence is 2-isopropylmalate synthase (520 aa).

In terms of domain architecture, Pyruvate carboxyltransferase spans 12-274; it reads IRIFDTTLRD…DTAINTPRIV (263 aa). The Mn(2+) site is built by aspartate 21, histidine 209, histidine 211, and asparagine 245. The regulatory domain stretch occupies residues 396–520; sequence RLASMTISDV…VVAGKTAAVA (125 aa).

This sequence belongs to the alpha-IPM synthase/homocitrate synthase family. LeuA type 1 subfamily. Homodimer. Mn(2+) serves as cofactor.

The protein localises to the cytoplasm. It carries out the reaction 3-methyl-2-oxobutanoate + acetyl-CoA + H2O = (2S)-2-isopropylmalate + CoA + H(+). Its pathway is amino-acid biosynthesis; L-leucine biosynthesis; L-leucine from 3-methyl-2-oxobutanoate: step 1/4. Functionally, catalyzes the condensation of the acetyl group of acetyl-CoA with 3-methyl-2-oxobutanoate (2-ketoisovalerate) to form 3-carboxy-3-hydroxy-4-methylpentanoate (2-isopropylmalate). The chain is 2-isopropylmalate synthase from Xanthomonas campestris pv. campestris (strain B100).